A 306-amino-acid chain; its full sequence is Peroxisome biogenesis factor 10 (306 aa).

The Peroxisomal matrix portion of the chain corresponds to 1 to 52 (MHLSAHIDPLQIILCTEIDEACIQFIKSQIEGIARACGPRMQANFEGVLIPY). A helical membrane pass occupies residues 53–84 (VDVLGKFLYRACCLRYATMGEEAARIVLAKQD). The Cytoplasmic segment spans residues 85 to 147 (RSKGLVLATT…PEAVISKEKH (63 aa)). The helical transmembrane segment at 148-174 (LVYILNSFKPILLKLVSIIRFLCLTMK) threads the bilayer. The Peroxisomal matrix segment spans residues 175 to 202 (GHCATVSQLLLGLKYISLDEINPEEKKK). A helical transmembrane segment spans residues 203 to 219 (VLTLLLLLGSRLIASIL). The Cytoplasmic segment spans residues 220–306 (QHSNSYFDQH…SSPSKIILLR (87 aa)). 8 residues coordinate Zn(2+): C256, C259, C271, H273, C276, C279, C290, and C293. An RING-type zinc finger spans residues 256–294 (CSLCMEFIHCPAATECGHIFCWSCINGWTSKKSECPLCR).

It belongs to the pex2/pex10/pex12 family. As to quaternary structure, component of the PEX2-PEX10-PEX12 retrotranslocation channel, composed of PEX2, PEX10 and PEX12.

Its subcellular location is the peroxisome membrane. The catalysed reaction is S-ubiquitinyl-[E2 ubiquitin-conjugating enzyme]-L-cysteine + [acceptor protein]-L-lysine = [E2 ubiquitin-conjugating enzyme]-L-cysteine + N(6)-ubiquitinyl-[acceptor protein]-L-lysine.. It participates in protein modification; protein ubiquitination. With respect to regulation, the E3 ubiquitin-protein ligase activity is stimulated by PEX12. E3 ubiquitin-protein ligase component of a retrotranslocation channel required for peroxisome organization by mediating export of the PEX5 receptor from peroxisomes to the cytosol, thereby promoting PEX5 recycling. The retrotranslocation channel is composed of PEX2, PEX10 and PEX12; each subunit contributing transmembrane segments that coassemble into an open channel that specifically allows the passage of PEX5 through the peroxisomal membrane. PEX10 also regulates PEX5 recycling by acting as a E3 ubiquitin-protein ligase. When PEX5 recycling is compromised, PEX10 catalyzes polyubiquitination of PEX5 during its passage through the retrotranslocation channel, leading to its degradation. This chain is Peroxisome biogenesis factor 10 (pas4), found in Schizosaccharomyces pombe (strain 972 / ATCC 24843) (Fission yeast).